The following is a 705-amino-acid chain: Crooked neck-like protein 1 (705 aa).

HAT repeat units follow at residues 55–87 (DYRLRKRQQYESLLGRNRKTAAIYIKYAAWEES), 89–121 (KDLTRARSVFERFLDIDHRIPTVWIKYAEMEMK), 123–155 (KNINLARNIWDRAVCLLPRVSQLWFKYTFMEDM), 157–188 (GNYPAARAIFERWMQWKPEPQAWNSYLKFEQR), 190–221 (KLFENTRLIFEKYILVHPYIKTWIKYTKFEER), 223–258 (GNIENARTIFQRAIEFLGEDGNDEQLFIAFAKFEEK), 260–294 (KEIERARVIYKYAIDHVPKSRAKDLFDTFTNFEKQ), 304–336 (VVLGKKRFQYEEEIKKNSKNYDIWFDYLKMEEI), 338–372 (GEIEKTREIYERSIGNLPPTNEKKHWKRYIYLWIN), 382–418 (KDMERARSVYSECIKLIPHKEFSFSKIWILYANFEIR), 420–451 (LNLDKARLIYGQAIGRNPKSKIFDQYIHLEIE), 453–485 (GNFDRVRTLYEKYLEIMPDNCDAWCKFAQLETE), 487–521 (GETVRARAIFELAIQQPNLDRPEVVWKDFIDSEIQ), and 523–554 (KQFDFVKQLYRKLLEKTNHVKVWIGFIKFVHS). The interval 559-591 (QQQKQRQQQQEEDGDSNTTKKDGGDDDNNDDIN) is disordered. An HAT 15 repeat occupies 597 to 629 (IFIEAHKSLSNSDKEERLLLLESWKEFEQTFGN).

The protein belongs to the crooked-neck family. In terms of assembly, identified in the spliceosome C complex.

It localises to the nucleus. Its subcellular location is the nucleus speckle. Its function is as follows. Involved in pre-mRNA splicing process. The sequence is that of Crooked neck-like protein 1 (crnkl1) from Dictyostelium discoideum (Social amoeba).